The primary structure comprises 189 residues: ATP synthase subunit delta (189 aa).

The protein belongs to the ATPase delta chain family. F-type ATPases have 2 components, F(1) - the catalytic core - and F(0) - the membrane proton channel. F(1) has five subunits: alpha(3), beta(3), gamma(1), delta(1), epsilon(1). F(0) has three main subunits: a(1), b(2) and c(10-14). The alpha and beta chains form an alternating ring which encloses part of the gamma chain. F(1) is attached to F(0) by a central stalk formed by the gamma and epsilon chains, while a peripheral stalk is formed by the delta and b chains.

It is found in the cell inner membrane. In terms of biological role, f(1)F(0) ATP synthase produces ATP from ADP in the presence of a proton or sodium gradient. F-type ATPases consist of two structural domains, F(1) containing the extramembraneous catalytic core and F(0) containing the membrane proton channel, linked together by a central stalk and a peripheral stalk. During catalysis, ATP synthesis in the catalytic domain of F(1) is coupled via a rotary mechanism of the central stalk subunits to proton translocation. This protein is part of the stalk that links CF(0) to CF(1). It either transmits conformational changes from CF(0) to CF(1) or is implicated in proton conduction. The protein is ATP synthase subunit delta of Methylorubrum extorquens (strain PA1) (Methylobacterium extorquens).